The primary structure comprises 282 residues: Undecaprenyl-diphosphatase (282 aa).

8 consecutive transmembrane segments (helical) span residues 1-21 (MTLIQAILLGIIQGLTEFLPI), 39-59 (PGAAFTAIIQIGTLGAVMLYF), 85-105 (AKMGWMIAAGTLPIVAFGLLF), 115-135 (SLYWISGALIILALVLSLAEW), 153-173 (IGWKEALLIGLAQAIALIPGS), 193-213 (AARFSFLLSLPAVFAAGAFEL), 229-249 (NLAVATITSGIVGYLSIAFLL), and 259-279 (IFIAYRLAAGAGLLLLLGGGT).

It belongs to the UppP family.

The protein resides in the cell inner membrane. The enzyme catalyses di-trans,octa-cis-undecaprenyl diphosphate + H2O = di-trans,octa-cis-undecaprenyl phosphate + phosphate + H(+). Catalyzes the dephosphorylation of undecaprenyl diphosphate (UPP). Confers resistance to bacitracin. This chain is Undecaprenyl-diphosphatase, found in Chlorobium luteolum (strain DSM 273 / BCRC 81028 / 2530) (Pelodictyon luteolum).